We begin with the raw amino-acid sequence, 169 residues long: Putative hydrolase 111R (169 aa).

The Nudix hydrolase domain maps to 46 to 169; that stretch reads FEKRKAGVFV…QKILMALSCN (124 aa). The Nudix box signature appears at 76–98; sequence GHMEAYDHSPKTCAERELKEETG. Residues glutamate 92, glutamate 96, and aspartate 138 each contribute to the Mg(2+) site.

Belongs to the Nudix hydrolase family. Mg(2+) serves as cofactor. The cofactor is Mn(2+).

The chain is Putative hydrolase 111R from Aedes vexans (Inland floodwater mosquito).